The chain runs to 255 residues: Putative Myb family transcription factor At1g14600 (255 aa).

Positions Arg20–Ile80 constitute an HTH myb-type domain. Positions Pro51–Arg76 form a DNA-binding region, H-T-H motif. The tract at residues Ile80–Asn110 is disordered.

It localises to the nucleus. In terms of biological role, putative transcription factor. This is Putative Myb family transcription factor At1g14600 from Arabidopsis thaliana (Mouse-ear cress).